Reading from the N-terminus, the 388-residue chain is Methylthioribose-1-phosphate isomerase (388 aa).

Catalysis depends on aspartate 258, which acts as the Proton donor.

It belongs to the eIF-2B alpha/beta/delta subunits family. MtnA subfamily.

Its subcellular location is the cytoplasm. The protein localises to the nucleus. The catalysed reaction is 5-(methylsulfanyl)-alpha-D-ribose 1-phosphate = 5-(methylsulfanyl)-D-ribulose 1-phosphate. The protein operates within amino-acid biosynthesis; L-methionine biosynthesis via salvage pathway; L-methionine from S-methyl-5-thio-alpha-D-ribose 1-phosphate: step 1/6. Functionally, catalyzes the interconversion of methylthioribose-1-phosphate (MTR-1-P) into methylthioribulose-1-phosphate (MTRu-1-P). This chain is Methylthioribose-1-phosphate isomerase (mri-1), found in Neurospora crassa (strain ATCC 24698 / 74-OR23-1A / CBS 708.71 / DSM 1257 / FGSC 987).